The sequence spans 516 residues: MYVNGRILRILKFKKDGFRQQNFLYPLLLQEYIYSLAHDHNFNSFFFYKPVEIFGYDNKSSLVLVKRLITRMYQQNSLISSVNYSNQKGFWGHKNFFFSNFYSQMVSEGFGVILEIPFSSQLVSSLEEKKIPKSQNLRSIHSIFPFLEDKFLHLNYVSDLLIPHPIHLEILVQILQCWIKDVPSLHLLRLLFHEYHYFNSLITSKKSIYAFSRIKKRFLWFLYNSYVYECEYLFHFLRKQSSYLRSTSSGVFLERTHFYVKIEHLIVVCCNSFHRILCFLKDPFMHYVRYQGKAILASKGTLILMKKWKFHLVNFWQSYLHFWSQPYRIHIKQLYNYSFSFLGYFSSVLENHLVVRNQMLENSFLINIMTKKLDTIAPVISLIGSLSKAQFCTVLGHPISKPIWTDLSDSDILDRFCRICRNLCRYHSGSSKKKVLYRIKYILRFSCARTLARKHKSTVRTFMRRLGSGLLEEFFMEEEVLSLIFLQKIPFPLHGSHRDRIWYLDIIHINDLVDHS.

Belongs to the intron maturase 2 family. MatK subfamily.

The protein localises to the plastid. The protein resides in the chloroplast. Its function is as follows. Usually encoded in the trnK tRNA gene intron. Probably assists in splicing its own and other chloroplast group II introns. This is Maturase K from Cypripedium calceolus (Yellow lady's slipper).